A 761-amino-acid chain; its full sequence is Mitochondrial inner membrane m-AAA protease component YTA10 (761 aa).

The Mitochondrial matrix segment spans residues 1–115 (MMMWQRYARG…SLSEYFRSKE (115 aa)). Residues 67–101 (SWTRLNENRPNKEGEGKNNGNKDNNSNKEDGKDKR) are disordered. 2 stretches are compositionally biased toward basic and acidic residues: residues 72 to 82 (NENRPNKEGEG) and 91 to 101 (NSNKEDGKDKR). Residues 116 to 136 (FANTMFLTIGFTIIFTLLTPS) traverse the membrane as a helical segment. At 137–223 (SNNSGDDSNR…IPIKYIERSS (87 aa)) the chain is on the mitochondrial intermembrane side. The chain crosses the membrane as a helical span at residues 224 to 244 (PFTFLFPFLPTIILLGGLYFI). At 245 to 761 (TRKINSSPPN…EPPEAPAATN (517 aa)) the chain is on the mitochondrial matrix side. ATP-binding residues include V290, A291, T332, G333, K334, T335, L336, and H472. H558 contacts Zn(2+). The active site involves E559. 2 residues coordinate Zn(2+): H562 and D634.

In the N-terminal section; belongs to the AAA ATPase family. This sequence in the C-terminal section; belongs to the peptidase M41 family. Component of the 850 kDa m-AAA protease complex, a heterohexamer composed of YTA12/RCA1 and YTA10/AFG3. Associates with the prohibitin complex, composed of PHB1 and PHB2, inhibiting the activity of the m-AAA protease complex. Zn(2+) is required as a cofactor.

It is found in the mitochondrion inner membrane. It carries out the reaction ATP + H2O = ADP + phosphate + H(+). With respect to regulation, ATP hydrolysis is coordinated within m-AAA protease ring complexes: ATP-binding to YTA10/AFG3 inhibits ATP hydrolysis by the neighboring subunit YTA12/RCA1, leading to coordinated ATP hydrolysis within the AAA ATPase ring. In terms of biological role, catalytic component of the m-AAA protease, a protease that plays a key role in proteostasis of inner mitochondrial membrane proteins. YTA10/AFG3 possesses both ATPase and protease activities: the ATPase activity is required to unfold substrates, threading them into the internal proteolytic cavity for hydrolysis into small peptide fragments. The complex is necessary for the assembly of mitochondrial respiratory chain and ATPase complexes. The m-AAA protease carries out protein quality control in the inner membrane of the mitochondria by mediating degradation of mistranslated or misfolded polypeptides. It also mediates protein maturation of the mitochondrial ribosomal subunit MRPL32/bL32m by catalyzing the cleavage of the presequence of MRPL32/bL32m prior to assembly into the mitochondrial ribosome. Promotes maturation of cytochrome c peroxidase (CCP1) by acting as a membrane protein dislocase via its ATPase activity: pulls the CCP1 transmembrane to the matrix prior to processing by the rhomboid protease PCP1. The membrane protein dislocase activity is also required to dislocate moderately hydrophobic transmembrane segments from the membrane. The protein is Mitochondrial inner membrane m-AAA protease component YTA10 of Saccharomyces cerevisiae (strain ATCC 204508 / S288c) (Baker's yeast).